The primary structure comprises 484 residues: ATP synthase subunit beta (484 aa).

G162 to T169 is a binding site for ATP.

The protein belongs to the ATPase alpha/beta chains family. In terms of assembly, F-type ATPases have 2 components, CF(1) - the catalytic core - and CF(0) - the membrane proton channel. CF(1) has five subunits: alpha(3), beta(3), gamma(1), delta(1), epsilon(1). CF(0) has four main subunits: a(1), b(1), b'(1) and c(9-12).

Its subcellular location is the cellular thylakoid membrane. The enzyme catalyses ATP + H2O + 4 H(+)(in) = ADP + phosphate + 5 H(+)(out). Its function is as follows. Produces ATP from ADP in the presence of a proton gradient across the membrane. The catalytic sites are hosted primarily by the beta subunits. In Trichodesmium erythraeum (strain IMS101), this protein is ATP synthase subunit beta.